The chain runs to 475 residues: Aspartyl/glutamyl-tRNA(Asn/Gln) amidotransferase subunit B (475 aa).

Belongs to the GatB/GatE family. GatB subfamily. Heterotrimer of A, B and C subunits.

It catalyses the reaction L-glutamyl-tRNA(Gln) + L-glutamine + ATP + H2O = L-glutaminyl-tRNA(Gln) + L-glutamate + ADP + phosphate + H(+). The enzyme catalyses L-aspartyl-tRNA(Asn) + L-glutamine + ATP + H2O = L-asparaginyl-tRNA(Asn) + L-glutamate + ADP + phosphate + 2 H(+). In terms of biological role, allows the formation of correctly charged Asn-tRNA(Asn) or Gln-tRNA(Gln) through the transamidation of misacylated Asp-tRNA(Asn) or Glu-tRNA(Gln) in organisms which lack either or both of asparaginyl-tRNA or glutaminyl-tRNA synthetases. The reaction takes place in the presence of glutamine and ATP through an activated phospho-Asp-tRNA(Asn) or phospho-Glu-tRNA(Gln). This Bacillus cereus (strain G9842) protein is Aspartyl/glutamyl-tRNA(Asn/Gln) amidotransferase subunit B.